The primary structure comprises 515 residues: Gap junction alpha-9 protein (515 aa).

The Cytoplasmic portion of the chain corresponds to 1–19 (MGDWNLLGDTLEEVHIHST). The chain crosses the membrane as a helical span at residues 20–40 (MIGKIWLTILFIFRMLVLGVA). The Extracellular portion of the chain corresponds to 41–77 (AEDVWNDEQSGFICNTEQPGCRNVCYDQAFPISLIRY). Residues 78-98 (WVLQVIFVSSPSLVYMGHALY) form a helical membrane-spanning segment. At 99-166 (RLRVLEEERQ…YVIHIFTRSV (68 aa)) the chain is on the cytoplasmic side. The helical transmembrane segment at 167–187 (VEVGFMIGQYLLYGFHLEPLF) threads the bilayer. Over 188 to 209 (KCHGHPCPNIIDCFVSRPTEKT) the chain is Extracellular. A helical membrane pass occupies residues 210-230 (IFLLFMQSIATISLFLNILEI). Residues 231-515 (FHLGFKKIKR…GRRVPTDLQI (285 aa)) are Cytoplasmic-facing. Basic and acidic residues predominate over residues 370–380 (KRETEGKDSKR). Disordered regions lie at residues 370 to 400 (KRET…GENN) and 428 to 472 (SSTE…NTAD). Polar residues predominate over residues 456–472 (PPSQGDSQSLDIPNTAD).

It belongs to the connexin family. Alpha-type (group II) subfamily. In terms of assembly, a connexon is composed of a hexamer of connexins. In terms of tissue distribution, highly abundant in skeletal muscle. Also detected in testis.

The protein resides in the cell membrane. The protein localises to the cell junction. Its subcellular location is the gap junction. Its function is as follows. One gap junction consists of a cluster of closely packed pairs of transmembrane channels, the connexons, through which materials of low MW diffuse from one cell to a neighboring cell. This is Gap junction alpha-9 protein (GJA9) from Homo sapiens (Human).